We begin with the raw amino-acid sequence, 942 residues long: Alpha,alpha-trehalose-phosphate synthase [UDP-forming] 1 (942 aa).

Positions 28–57 (REKRKSNRARNPNDVAGSSENSENDLRLEG) are disordered. The segment at 92-559 (QRLLVVANRL…AETFVSELND (468 aa)) is glycosyltransferase. The tract at residues 815-892 (DMPAIARSRP…LGNSRRPSPE (78 aa)) is disordered. Low complexity-rich tracts occupy residues 821-833 (RSRP…AKSS) and 841-867 (SKST…NKSS). A compositionally biased stretch (polar residues) spans 879 to 888 (SNHSLGNSRR).

In the N-terminal section; belongs to the glycosyltransferase 20 family. The protein in the C-terminal section; belongs to the trehalose phosphatase family. In terms of tissue distribution, expressed in seedlings, leaves, roots, stems, flowers and siliques.

It localises to the vacuole. Its subcellular location is the secreted. The protein resides in the cell wall. It is found in the cytoplasm. It catalyses the reaction D-glucose 6-phosphate + UDP-alpha-D-glucose = alpha,alpha-trehalose 6-phosphate + UDP + H(+). In terms of biological role, required for normal embryo development, vegetative growth and transition to flowering. Regulates embryo growth, cell wall deposition, starch and sucrose degradation, but not cell differentiation. Involved in the regulation of glucose sensing and signaling genes during plant development. The polypeptide is Alpha,alpha-trehalose-phosphate synthase [UDP-forming] 1 (Arabidopsis thaliana (Mouse-ear cress)).